The sequence spans 286 residues: Ribosomal RNA small subunit methyltransferase A (286 aa).

6 residues coordinate S-adenosyl-L-methionine: asparagine 28, leucine 30, glycine 55, glutamate 77, aspartate 103, and asparagine 123.

Belongs to the class I-like SAM-binding methyltransferase superfamily. rRNA adenine N(6)-methyltransferase family. RsmA subfamily.

The protein resides in the cytoplasm. It catalyses the reaction adenosine(1518)/adenosine(1519) in 16S rRNA + 4 S-adenosyl-L-methionine = N(6)-dimethyladenosine(1518)/N(6)-dimethyladenosine(1519) in 16S rRNA + 4 S-adenosyl-L-homocysteine + 4 H(+). Its function is as follows. Specifically dimethylates two adjacent adenosines (A1518 and A1519) in the loop of a conserved hairpin near the 3'-end of 16S rRNA in the 30S particle. May play a critical role in biogenesis of 30S subunits. This Bradyrhizobium sp. (strain BTAi1 / ATCC BAA-1182) protein is Ribosomal RNA small subunit methyltransferase A.